Consider the following 317-residue polypeptide: RHOMBOID-like protein 2 (317 aa).

7 helical membrane-spanning segments follow: residues 33–53 (SWLIPAIVVANLAVFIAVMFV), 118–138 (WLHAGIIHLLTNMLSLIFIGI), 149–169 (VGLIYLISGLGGSILSSLFLQ), 172–192 (ISVGASGALFGLLGAMLSELL), 202–222 (AAALITLLFIIAINLALGMLP), 224–244 (VDNFAHIGGFLTGFCLGFVLL), and 272–292 (LFVVSVVLLVVGLTVALVMLF). Serine 177 acts as the Nucleophile in catalysis. Histidine 229 (charge relay system) is an active-site residue.

The protein belongs to the peptidase S54 family. Expressed in roots, seedlings, leaves, stems and flowers.

The protein resides in the golgi apparatus membrane. The catalysed reaction is Cleaves type-1 transmembrane domains using a catalytic dyad composed of serine and histidine that are contributed by different transmembrane domains.. Its function is as follows. Rhomboid-type serine protease that catalyzes intramembrane proteolysis. Can cleave the Drosophila proteins Spitz and Keren. May function in pollen elongation. The protein is RHOMBOID-like protein 2 of Arabidopsis thaliana (Mouse-ear cress).